Reading from the N-terminus, the 542-residue chain is Putative serine/threonine-protein kinase L205 (542 aa).

The span at 20-30 (FEKKSVGHNSD) shows a compositional bias: basic and acidic residues. The segment at 20–49 (FEKKSVGHNSDDEYDDTVPYNEDDETSEEE) is disordered. Over residues 31 to 49 (DEYDDTVPYNEDDETSEEE) the composition is skewed to acidic residues. Residues 69–538 (YLLLKKIGSG…ADELLKHPWL (470 aa)) form the Protein kinase domain. Residues 75-83 (IGSGNNASV) and lysine 98 each bind ATP. Aspartate 201 (proton acceptor) is an active-site residue. Positions 278 to 314 (EELIPDDPDNNEKYYDSTDSEEYDYSDNSDYYDDDED) are disordered. Positions 295–314 (TDSEEYDYSDNSDYYDDDED) are enriched in acidic residues.

The protein belongs to the protein kinase superfamily. Ser/Thr protein kinase family.

It catalyses the reaction L-seryl-[protein] + ATP = O-phospho-L-seryl-[protein] + ADP + H(+). It carries out the reaction L-threonyl-[protein] + ATP = O-phospho-L-threonyl-[protein] + ADP + H(+). This is Putative serine/threonine-protein kinase L205 from Acanthamoeba polyphaga (Amoeba).